A 207-amino-acid polypeptide reads, in one-letter code: Large ribosomal subunit protein uL4 (207 aa).

A disordered region spans residues 56–76; it reads EVRGGGRKPWRQKGTGRARAG. The segment covering 60–71 has biased composition (basic residues); that stretch reads GGRKPWRQKGTG.

This sequence belongs to the universal ribosomal protein uL4 family. In terms of assembly, part of the 50S ribosomal subunit.

One of the primary rRNA binding proteins, this protein initially binds near the 5'-end of the 23S rRNA. It is important during the early stages of 50S assembly. It makes multiple contacts with different domains of the 23S rRNA in the assembled 50S subunit and ribosome. In terms of biological role, forms part of the polypeptide exit tunnel. The protein is Large ribosomal subunit protein uL4 of Desulfitobacterium hafniense (strain Y51).